The following is a 287-amino-acid chain: Iron-sulfur cluster carrier protein (287 aa).

47–54 (GKGGVGKS) lines the ATP pocket.

It belongs to the Mrp/NBP35 ATP-binding proteins family. As to quaternary structure, homodimer.

In terms of biological role, binds and transfers iron-sulfur (Fe-S) clusters to target apoproteins. Can hydrolyze ATP. The chain is Iron-sulfur cluster carrier protein from Pseudomonas fragi.